A 143-amino-acid polypeptide reads, in one-letter code: 3-dehydroquinate dehydratase (143 aa).

The Proton acceptor role is filled by Tyr23. 3 residues coordinate substrate: Asn74, His80, and Asp87. His100 (proton donor) is an active-site residue. Substrate-binding positions include 101 to 102 (IS) and Arg111.

It belongs to the type-II 3-dehydroquinase family. In terms of assembly, homododecamer.

The catalysed reaction is 3-dehydroquinate = 3-dehydroshikimate + H2O. It functions in the pathway metabolic intermediate biosynthesis; chorismate biosynthesis; chorismate from D-erythrose 4-phosphate and phosphoenolpyruvate: step 3/7. Its function is as follows. Catalyzes a trans-dehydration via an enolate intermediate. This Endomicrobium trichonymphae protein is 3-dehydroquinate dehydratase.